We begin with the raw amino-acid sequence, 259 residues long: Archaerhodopsin-2 (259 aa).

Residues 1-6 constitute a propeptide that is removed on maturation; it reads MDPIAL. Pyrrolidone carboxylic acid is present on Gln-7. At 7 to 18 the chain is on the extracellular side; that stretch reads QAGFDLLNDGRP. Residues 19–40 traverse the membrane as a helical segment; sequence ETLWLGIGTLLMLIGTFYFIAR. Residues 41–49 are Cytoplasmic-facing; that stretch reads GWGVTDKEA. A helical transmembrane segment spans residues 50 to 71; that stretch reads REYYAITILVPGIASAAYLAMF. Topologically, residues 72 to 90 are extracellular; the sequence is FGIGVTEVELASGTVLDIY. Residues 91–112 form a helical membrane-spanning segment; the sequence is YARYADWLFTTPLLLLDLALLA. Residues 113–115 lie on the Cytoplasmic side of the membrane; it reads KVD. The helical transmembrane segment at 116 to 138 threads the bilayer; the sequence is RVTIGTLIGVDALMIVTGLIGAL. Residues 139-142 are Extracellular-facing; the sequence is SKTP. Residues 143–171 traverse the membrane as a helical segment; it reads LARYTWWLFSTIAFLFVLYYLLTSLRSAA. The Cytoplasmic portion of the chain corresponds to 172–174; sequence AKR. Residues 175 to 203 form a helical membrane-spanning segment; sequence SEEVRSTFNTLTALVAVLWTAYPILWIVG. Residues 204 to 211 lie on the Extracellular side of the membrane; the sequence is TEGAGVVG. Residues 212–244 form a helical membrane-spanning segment; the sequence is LGIETLAFMVLDVTAKVGFGFVLLRSRAILGET. N6-(retinylidene)lysine is present on Lys-227. The Cytoplasmic portion of the chain corresponds to 245 to 259; the sequence is EAPEPSAGADASAAD.

It belongs to the archaeal/bacterial/fungal opsin family.

It localises to the cell membrane. Functionally, light-driven proton pump. It may interact with bacterioruberin in the claret membrane. This Halobacterium sp. (strain aus-2) protein is Archaerhodopsin-2.